A 236-amino-acid polypeptide reads, in one-letter code: HTH-type transcriptional regulator SACE_5812 (236 aa).

The HTH tetR-type domain maps to 30–90; it reads LLTQDKIVSA…LALDAVFGEV (61 aa). The H-T-H motif DNA-binding region spans 53-72; it reads SMRKLADRLQAHATSLYWHV.

In terms of biological role, transcriptional regulator that inhibits erythromycin production. Directly represses the expression of SACE_5813, eryAI (encoding polyketide synthase I) and ermE (encoding rRNA methyltransferase), suggesting its direct regulation of the erythromycin biosynthesis gene cluster. May play an important role in regulating secondary metabolism in actinomycetes. This Saccharopolyspora erythraea (strain ATCC 11635 / DSM 40517 / JCM 4748 / NBRC 13426 / NCIMB 8594 / NRRL 2338) protein is HTH-type transcriptional regulator SACE_5812.